Consider the following 180-residue polypeptide: uncharacterized protein (180 aa).

The interval 1–93 (MPSSVPKTSI…LPRRRNPGWV (93 aa)) is disordered. Low complexity-rich tracts occupy residues 9 to 25 (SIES…SQAS) and 47 to 64 (LTSS…SSSQ).

This is an uncharacterized protein from Homo sapiens (Human).